Reading from the N-terminus, the 110-residue chain is uncharacterized protein (110 aa).

The first 26 residues, 1 to 26 (MIRNVLLAFMICSGMTLLGGCSSVMS), serve as a signal peptide directing secretion. Residues 87–110 (RVEKSEANAQATNAVIPPARMPDN) are disordered.

To E.coli YceK.

This is an uncharacterized protein from Escherichia coli (strain K12).